The chain runs to 298 residues: 4-diphosphocytidyl-2-C-methyl-D-erythritol kinase (298 aa).

Lys11 is a catalytic residue. 94–104 (PMGGGLGGGSS) contributes to the ATP binding site. Residue Asp136 is part of the active site.

The protein belongs to the GHMP kinase family. IspE subfamily.

The catalysed reaction is 4-CDP-2-C-methyl-D-erythritol + ATP = 4-CDP-2-C-methyl-D-erythritol 2-phosphate + ADP + H(+). Its pathway is isoprenoid biosynthesis; isopentenyl diphosphate biosynthesis via DXP pathway; isopentenyl diphosphate from 1-deoxy-D-xylulose 5-phosphate: step 3/6. Its function is as follows. Catalyzes the phosphorylation of the position 2 hydroxy group of 4-diphosphocytidyl-2C-methyl-D-erythritol. This chain is 4-diphosphocytidyl-2-C-methyl-D-erythritol kinase, found in Chromohalobacter salexigens (strain ATCC BAA-138 / DSM 3043 / CIP 106854 / NCIMB 13768 / 1H11).